A 496-amino-acid chain; its full sequence is Thiamine transporter 2 (496 aa).

Topologically, residues 1 to 7 are cytoplasmic; that stretch reads MDCYRTS. The chain crosses the membrane as a helical span at residues 8 to 28; that stretch reads PSNSWIYTTVILCIFGFFSMM. Topologically, residues 29-53 are extracellular; that stretch reads RPSEPFLIPYLSGPDKNLTSEEMTN. N-linked (GlcNAc...) asparagine glycosylation is present at asparagine 45. The chain crosses the membrane as a helical span at residues 54–74; it reads EIFPVWTYSYLVLLLPVLVLT. Residues 75-81 are Cytoplasmic-facing; the sequence is DYVRYKP. The helical transmembrane segment at 82–102 threads the bilayer; that stretch reads VIILQGISFIITWLLLLFGQG. Over 103–110 the chain is Extracellular; the sequence is VKTMQVVE. The chain crosses the membrane as a helical span at residues 111 to 131; the sequence is FFYGMVTATEVAYYAYIYSVV. Residues 132–144 lie on the Cytoplasmic side of the membrane; that stretch reads SPEHYQRVSGYCR. A helical membrane pass occupies residues 145–165; it reads SVTLVAYTAGSVLAQLLVSLA. Asparagine 166 carries N-linked (GlcNAc...) asparagine glycosylation. The Extracellular portion of the chain corresponds to 166–169; sequence NLSY. The chain crosses the membrane as a helical span at residues 170–190; it reads FYLNVISLASVSVAFLFSLFL. Over 191–282 the chain is Cytoplasmic; sequence PMPKKSMFFH…YSSKRLFYWS (92 aa). Positions 210-248 are disordered; that stretch reads SSSVNPVLEETHEGEAPDCEKQKPTSEIPSTSGKLHKGQ. Over residues 218-233 the composition is skewed to basic and acidic residues; it reads EETHEGEAPDCEKQKP. Polar residues predominate over residues 234 to 248; that stretch reads TSEIPSTSGKLHKGQ. A helical membrane pass occupies residues 283–303; it reads LWWAFATAGFNQILNYVQILW. Residues 304-316 lie on the Extracellular side of the membrane; sequence DYKSPSQDSSIYN. Residues 317–337 form a helical membrane-spanning segment; it reads GAVEATATFGGAVAAFAVGYV. The Cytoplasmic portion of the chain corresponds to 338–342; it reads KVNWD. The helical transmembrane segment at 343 to 363 threads the bilayer; sequence LLGELALAVFSVVNAGSLFLM. Over 364-375 the chain is Extracellular; the sequence is HYTANIWACYAG. A helical membrane pass occupies residues 376–396; the sequence is YLIFKSSYMLLITIAVFQIAV. Over 397–405 the chain is Cytoplasmic; the sequence is NLSVERYAL. Residues 406–426 form a helical membrane-spanning segment; sequence VFGINTFIALVIQTIITVIVV. At 427–434 the chain is on the extracellular side; the sequence is DQRGLNLP. Residues 435–455 form a helical membrane-spanning segment; it reads ISIQFLVYGSYFAVIAGIFLM. The Cytoplasmic portion of the chain corresponds to 456–496; sequence RSMYIIYSTKSQKDVQSPAPSENPDMSHPEEESNAIMSTKL. The segment at 469–496 is disordered; the sequence is DVQSPAPSENPDMSHPEEESNAIMSTKL.

This sequence belongs to the reduced folate carrier (RFC) transporter (TC 2.A.48) family.

It is found in the membrane. The catalysed reaction is thiamine(out) + H(+)(in) = thiamine(in) + H(+)(out). It carries out the reaction pyridoxine(out) + n H(+)(out) = pyridoxine(in) + n H(+)(in). In terms of biological role, mediates high affinity thiamine uptake, probably via a proton anti-port mechanism. Has no folate transport activity. Mediates H(+)-dependent pyridoxine transport. This is Thiamine transporter 2 (SLC19A3) from Macaca fascicularis (Crab-eating macaque).